The sequence spans 306 residues: uncharacterized protein (306 aa).

To L.delbrueckii similar ORF in glnA 5'region.

This is an uncharacterized protein from Lactobacillus delbrueckii subsp. bulgaricus.